Consider the following 144-residue polypeptide: 3-dehydroquinate dehydratase (144 aa).

Tyr24 acts as the Proton acceptor in catalysis. Positions 76, 82, and 89 each coordinate substrate. The Proton donor role is filled by His102. Substrate-binding positions include 103 to 104 (LS) and Arg113.

The protein belongs to the type-II 3-dehydroquinase family. Homododecamer.

The catalysed reaction is 3-dehydroquinate = 3-dehydroshikimate + H2O. It functions in the pathway metabolic intermediate biosynthesis; chorismate biosynthesis; chorismate from D-erythrose 4-phosphate and phosphoenolpyruvate: step 3/7. In terms of biological role, catalyzes a trans-dehydration via an enolate intermediate. The polypeptide is 3-dehydroquinate dehydratase (Bordetella petrii (strain ATCC BAA-461 / DSM 12804 / CCUG 43448)).